The sequence spans 75 residues: MARQLFKRRKFCRFTAEGIKEVDYKAVDLLKDFIAENGKIIPARITGTKARYQRQLSTAIKRARFLALMPYTDQH.

This sequence belongs to the bacterial ribosomal protein bS18 family. In terms of assembly, part of the 30S ribosomal subunit. Forms a tight heterodimer with protein bS6.

In terms of biological role, binds as a heterodimer with protein bS6 to the central domain of the 16S rRNA, where it helps stabilize the platform of the 30S subunit. This chain is Small ribosomal subunit protein bS18, found in Laribacter hongkongensis (strain HLHK9).